A 308-amino-acid polypeptide reads, in one-letter code: 1,4-dihydroxy-2-naphthoate octaprenyltransferase (308 aa).

9 consecutive transmembrane segments (helical) span residues 22-42 (TLPLALASIFTGSALGYWANP), 47-67 (GLVMVLCLLTTILLQVLSNFA), 101-121 (WGLILMVMASFLSGSFLIGIA), 129-149 (FAFAGLGILAIVAAITYTVGV), 153-173 (GYMGLGDISVLVFFGLLGVGG), 186-206 (IILPAIGSGLLASAVLNINNL), 235-255 (ILLSVAALCYLAFAVATAISW), 256-276 (TNYLFVLAMPLLAKHAIFVYC), and 286-306 (ILAQMSMISLLINILFSLGLL).

The protein belongs to the MenA family. Type 1 subfamily.

It is found in the cell inner membrane. The catalysed reaction is an all-trans-polyprenyl diphosphate + 1,4-dihydroxy-2-naphthoate + H(+) = a 2-demethylmenaquinol + CO2 + diphosphate. The protein operates within quinol/quinone metabolism; menaquinone biosynthesis; menaquinol from 1,4-dihydroxy-2-naphthoate: step 1/2. Conversion of 1,4-dihydroxy-2-naphthoate (DHNA) to demethylmenaquinone (DMK). The polypeptide is 1,4-dihydroxy-2-naphthoate octaprenyltransferase (Haemophilus influenzae (strain ATCC 51907 / DSM 11121 / KW20 / Rd)).